The primary structure comprises 394 residues: MSFQPTPEDKFTFGLWTVGWQGRDPFGDATRPGLDPVETVQRLAELGAYGVTFHDDDLNPFGSSDTERESHIKRFRQALDATGMTVPMATTNLFTHPVFKDRFTANDRDVRAYAVRKTIRNIDLAAELGAKTYVAWGGREGAESGGAKDVRDALDRMKEAFDLLGEYVTAQGYDLRFAIEPKPNEPRGDILLPTVGHALAFIERLERPELYGVNPEVGHEQMAGLNFPHGIAQALWAGKLFHIDLNGQSGIKYDQDCGSRRRPAGGVLVVDLLESAGYEGPRHFDFKPPRTEDFDGVWASAEGCMRNYLILKQPRPPSAPTRRCRRRASAPRVWTSWPSRPLADGLEALLADRTAFEDFDVEAAAARGMVRTPRPAGDGPPAGRARLTVAPRKR.

Active-site residues include His-54 and Asp-57. Glu-180, Glu-216, His-219, Asp-244, Asp-254, Asp-256, and Asp-285 together coordinate Mg(2+). The interval 370–394 (VRTPRPAGDGPPAGRARLTVAPRKR) is disordered. Residues 373-386 (PRPAGDGPPAGRAR) show a composition bias toward low complexity.

Belongs to the xylose isomerase family. Homotetramer. Mg(2+) serves as cofactor.

It localises to the cytoplasm. The catalysed reaction is alpha-D-xylose = alpha-D-xylulofuranose. Functionally, involved in D-xylose catabolism. This is Xylose isomerase (xylA) from Streptomyces rochei (Streptomyces parvullus).